The primary structure comprises 422 residues: Lipoyl synthase, mitochondrial (422 aa).

Residues 1 to 34 (MAASSTRLRCLYASSAPAWKKSPSQSIISLSRHY) constitute a mitochondrion transit peptide. Polar residues predominate over residues 37-48 (TSSTTPSLNPDE). The tract at residues 37–70 (TSSTTPSLNPDESSSSSSSTIPKRRKTTTFRDKL) is disordered. Cysteine 146, cysteine 151, cysteine 157, cysteine 177, cysteine 181, cysteine 184, and serine 383 together coordinate [4Fe-4S] cluster. In terms of domain architecture, Radical SAM core spans 160–372 (GSDKSAATAT…RQRALEMGFL (213 aa)).

Belongs to the radical SAM superfamily. Lipoyl synthase family. It depends on [4Fe-4S] cluster as a cofactor.

It localises to the mitochondrion. It carries out the reaction [[Fe-S] cluster scaffold protein carrying a second [4Fe-4S](2+) cluster] + N(6)-octanoyl-L-lysyl-[protein] + 2 oxidized [2Fe-2S]-[ferredoxin] + 2 S-adenosyl-L-methionine + 4 H(+) = [[Fe-S] cluster scaffold protein] + N(6)-[(R)-dihydrolipoyl]-L-lysyl-[protein] + 4 Fe(3+) + 2 hydrogen sulfide + 2 5'-deoxyadenosine + 2 L-methionine + 2 reduced [2Fe-2S]-[ferredoxin]. It functions in the pathway protein modification; protein lipoylation via endogenous pathway; protein N(6)-(lipoyl)lysine from octanoyl-[acyl-carrier-protein]: step 2/2. Functionally, catalyzes the radical-mediated insertion of two sulfur atoms into the C-6 and C-8 positions of the octanoyl moiety bound to the lipoyl domains of lipoate-dependent enzymes, thereby converting the octanoylated domains into lipoylated derivatives. This Talaromyces stipitatus (strain ATCC 10500 / CBS 375.48 / QM 6759 / NRRL 1006) (Penicillium stipitatum) protein is Lipoyl synthase, mitochondrial.